The primary structure comprises 380 residues: Cytochrome b (380 aa).

Transmembrane regions (helical) follow at residues 34–54, 78–99, 114–134, and 179–199; these read FGSL…LLAA, WLIR…YLHI, WNIG…GYVL, and FFAL…VHLT. Heme b contacts are provided by His84 and His98. 2 residues coordinate heme b: His183 and His197. His202 lines the a ubiquinone pocket. 4 helical membrane passes run 227–247, 289–309, 321–341, and 348–368; these read IKDI…ALFS, LGGV…PLLH, LSQI…WVGS, and FIII…VLFP.

It belongs to the cytochrome b family. The cytochrome bc1 complex contains 11 subunits: 3 respiratory subunits (MT-CYB, CYC1 and UQCRFS1), 2 core proteins (UQCRC1 and UQCRC2) and 6 low-molecular weight proteins (UQCRH/QCR6, UQCRB/QCR7, UQCRQ/QCR8, UQCR10/QCR9, UQCR11/QCR10 and a cleavage product of UQCRFS1). This cytochrome bc1 complex then forms a dimer. It depends on heme b as a cofactor.

It localises to the mitochondrion inner membrane. Component of the ubiquinol-cytochrome c reductase complex (complex III or cytochrome b-c1 complex) that is part of the mitochondrial respiratory chain. The b-c1 complex mediates electron transfer from ubiquinol to cytochrome c. Contributes to the generation of a proton gradient across the mitochondrial membrane that is then used for ATP synthesis. The chain is Cytochrome b (MT-CYB) from Paradisaea rubra (Red bird of paradise).